A 545-amino-acid chain; its full sequence is Chaperonin GroEL 4 (545 aa).

Residues threonine 30 to proline 33, lysine 51, aspartate 87 to threonine 91, glycine 415, and aspartate 495 each bind ATP.

Belongs to the chaperonin (HSP60) family. In terms of assembly, forms a cylinder of 14 subunits composed of two heptameric rings stacked back-to-back. Interacts with the co-chaperonin GroES.

The protein localises to the cytoplasm. It catalyses the reaction ATP + H2O + a folded polypeptide = ADP + phosphate + an unfolded polypeptide.. Its function is as follows. Together with its co-chaperonin GroES, plays an essential role in assisting protein folding. The GroEL-GroES system forms a nano-cage that allows encapsulation of the non-native substrate proteins and provides a physical environment optimized to promote and accelerate protein folding. This chain is Chaperonin GroEL 4, found in Rhizobium meliloti (strain 1021) (Ensifer meliloti).